Here is a 1513-residue protein sequence, read N- to C-terminus: DNA-directed RNA polymerase subunit beta'' (1513 aa).

Zn(2+)-binding residues include Cys220, Cys296, Cys303, and Cys306. The segment at 644 to 769 (RTREKDSENE…EYGNPEEDSV (126 aa)) is disordered. The span at 659-679 (NEYRTREEECKTLEDEYRTRE) shows a compositional bias: basic and acidic residues. The segment covering 680–707 (EEYETLEDEYGIPENEYETLEDEYGILE) has biased composition (acidic residues). A compositionally biased stretch (basic and acidic residues) spans 726–737 (NKYRPREDKYGT). Positions 738-767 (LEEDSEDEHGTLEEDSEEDSEDEYGNPEED) are enriched in acidic residues.

Belongs to the RNA polymerase beta' chain family. RpoC2 subfamily. In terms of assembly, in plastids the minimal PEP RNA polymerase catalytic core is composed of four subunits: alpha, beta, beta', and beta''. When a (nuclear-encoded) sigma factor is associated with the core the holoenzyme is formed, which can initiate transcription. It depends on Zn(2+) as a cofactor.

It localises to the plastid. Its subcellular location is the chloroplast. The catalysed reaction is RNA(n) + a ribonucleoside 5'-triphosphate = RNA(n+1) + diphosphate. Functionally, DNA-dependent RNA polymerase catalyzes the transcription of DNA into RNA using the four ribonucleoside triphosphates as substrates. The polypeptide is DNA-directed RNA polymerase subunit beta'' (Oryza sativa (Rice)).